The following is a 195-amino-acid chain: Nicotinamide riboside kinase 1 (195 aa).

10-18 (GVTNGGKTT) contacts ATP. Residues Thr-17 and Asp-36 each coordinate Mg(2+). The Proton acceptor role is filled by Asp-36. Substrate contacts are provided by residues 36–39 (DDFF) and 55–56 (YD). ATP is bound at residue Arg-128. Substrate contacts are provided by residues Arg-129 and 134–135 (YE). Residues 132–134 (RVY) and 172–174 (RSE) contribute to the ATP site.

This sequence belongs to the uridine kinase family. NRK subfamily. Monomer.

The enzyme catalyses beta-nicotinamide D-riboside + ATP = beta-nicotinamide D-ribonucleotide + ADP + H(+). The catalysed reaction is beta-D-ribosylnicotinate + ATP = nicotinate beta-D-ribonucleotide + ADP + H(+). The protein operates within cofactor biosynthesis; NAD(+) biosynthesis. Its function is as follows. Catalyzes the phosphorylation of nicotinamide riboside (NR) and nicotinic acid riboside (NaR) to form nicotinamide mononucleotide (NMN) and nicotinic acid mononucleotide (NaMN). This Rattus norvegicus (Rat) protein is Nicotinamide riboside kinase 1 (Nmrk1).